A 244-amino-acid polypeptide reads, in one-letter code: Demethylmenaquinone methyltransferase (244 aa).

S-adenosyl-L-methionine contacts are provided by residues T65, D86, and 114-115; that span reads DA.

Belongs to the class I-like SAM-binding methyltransferase superfamily. MenG/UbiE family.

It catalyses the reaction a 2-demethylmenaquinol + S-adenosyl-L-methionine = a menaquinol + S-adenosyl-L-homocysteine + H(+). It functions in the pathway quinol/quinone metabolism; menaquinone biosynthesis; menaquinol from 1,4-dihydroxy-2-naphthoate: step 2/2. Functionally, methyltransferase required for the conversion of demethylmenaquinol (DMKH2) to menaquinol (MKH2). In Lactobacillus johnsonii (strain CNCM I-12250 / La1 / NCC 533), this protein is Demethylmenaquinone methyltransferase.